The primary structure comprises 183 residues: Erythropoietin (183 aa).

Residues 1 to 23 (MFHGSGLFALLLMVLEWTRPGLS) form the signal peptide. Cystine bridges form between cysteine 30/cysteine 178 and cysteine 52/cysteine 56. 2 N-linked (GlcNAc...) asparagine glycosylation sites follow: asparagine 61 and asparagine 104.

The protein belongs to the EPO/TPO family. N-glycosylated. Expressed in heart and liver.

It localises to the secreted. Functionally, erythropoietin is the principal hormone involved in the regulation of erythrocyte differentiation and the maintenance of a physiological level of circulating erythrocyte mass. The sequence is that of Erythropoietin (epo) from Danio rerio (Zebrafish).